The chain runs to 589 residues: Probable peptidoglycan D,D-transpeptidase FtsI (589 aa).

Residues 47–67 traverse the membrane as a helical segment; sequence IFLVMGFFGFCFVGVSLGAGW. S296 serves as the catalytic Acyl-ester intermediate.

Belongs to the transpeptidase family. Interacts with FtsN and FtsW.

The protein localises to the cell inner membrane. It carries out the reaction Preferential cleavage: (Ac)2-L-Lys-D-Ala-|-D-Ala. Also transpeptidation of peptidyl-alanyl moieties that are N-acyl substituents of D-alanine.. It functions in the pathway cell wall biogenesis; peptidoglycan biosynthesis. In terms of biological role, catalyzes cross-linking of the peptidoglycan cell wall at the division septum. This chain is Probable peptidoglycan D,D-transpeptidase FtsI (ftsI), found in Caulobacter vibrioides (strain NA1000 / CB15N) (Caulobacter crescentus).